A 124-amino-acid chain; its full sequence is UPF0102 protein Noca_3248 (124 aa).

The protein belongs to the UPF0102 family.

The sequence is that of UPF0102 protein Noca_3248 from Nocardioides sp. (strain ATCC BAA-499 / JS614).